Reading from the N-terminus, the 67-residue chain is Large ribosomal subunit protein uL29 (67 aa).

The protein belongs to the universal ribosomal protein uL29 family. In terms of assembly, part of the 50S ribosomal subunit. Contacts protein L23 and trigger factor when it is complexed with the ribosome.

Binds the 23S rRNA. One of the proteins that surrounds the polypeptide exit tunnel on the outside of the subunit. In Deinococcus radiodurans (strain ATCC 13939 / DSM 20539 / JCM 16871 / CCUG 27074 / LMG 4051 / NBRC 15346 / NCIMB 9279 / VKM B-1422 / R1), this protein is Large ribosomal subunit protein uL29 (rpmC).